The chain runs to 356 residues: S-adenosylmethionine:tRNA ribosyltransferase-isomerase (356 aa).

The protein belongs to the QueA family. In terms of assembly, monomer.

The protein localises to the cytoplasm. It catalyses the reaction 7-aminomethyl-7-carbaguanosine(34) in tRNA + S-adenosyl-L-methionine = epoxyqueuosine(34) in tRNA + adenine + L-methionine + 2 H(+). It functions in the pathway tRNA modification; tRNA-queuosine biosynthesis. Functionally, transfers and isomerizes the ribose moiety from AdoMet to the 7-aminomethyl group of 7-deazaguanine (preQ1-tRNA) to give epoxyqueuosine (oQ-tRNA). This is S-adenosylmethionine:tRNA ribosyltransferase-isomerase from Chromohalobacter salexigens (strain ATCC BAA-138 / DSM 3043 / CIP 106854 / NCIMB 13768 / 1H11).